We begin with the raw amino-acid sequence, 495 residues long: L-2,4-diaminobutyrate decarboxylase (495 aa).

Lys312 carries the post-translational modification N6-(pyridoxal phosphate)lysine.

This sequence belongs to the group II decarboxylase family. Requires pyridoxal 5'-phosphate as cofactor.

The catalysed reaction is L-2,4-diaminobutanoate + H(+) = propane-1,3-diamine + CO2. It functions in the pathway siderophore biosynthesis; rhizobactin biosynthesis. The sequence is that of L-2,4-diaminobutyrate decarboxylase (rhbB) from Rhizobium meliloti (strain 1021) (Ensifer meliloti).